The primary structure comprises 199 residues: Recombination protein RecR (199 aa).

The C4-type zinc finger occupies 57–72; that stretch reads CSICGNITEGDPCSIC. The region spanning 80–176 is the Toprim domain; it reads THVLVVEQPK…KVTRLAHGLS (97 aa).

This sequence belongs to the RecR family.

May play a role in DNA repair. It seems to be involved in an RecBC-independent recombinational process of DNA repair. It may act with RecF and RecO. In Levilactobacillus brevis (strain ATCC 367 / BCRC 12310 / CIP 105137 / JCM 1170 / LMG 11437 / NCIMB 947 / NCTC 947) (Lactobacillus brevis), this protein is Recombination protein RecR.